A 101-amino-acid chain; its full sequence is Small ribosomal subunit protein uS14 (101 aa).

The protein belongs to the universal ribosomal protein uS14 family. In terms of assembly, part of the 30S ribosomal subunit. Contacts proteins S3 and S10.

In terms of biological role, binds 16S rRNA, required for the assembly of 30S particles and may also be responsible for determining the conformation of the 16S rRNA at the A site. The sequence is that of Small ribosomal subunit protein uS14 from Psychrobacter arcticus (strain DSM 17307 / VKM B-2377 / 273-4).